Consider the following 275-residue polypeptide: Glutamate racemase (275 aa).

Residues 12–13 (DS) and 44–45 (YG) each bind substrate. The active-site Proton donor/acceptor is cysteine 75. Residue 76–77 (NT) participates in substrate binding. Cysteine 185 (proton donor/acceptor) is an active-site residue. 186–187 (TH) is a binding site for substrate.

The protein belongs to the aspartate/glutamate racemases family.

The catalysed reaction is L-glutamate = D-glutamate. It functions in the pathway cell wall biogenesis; peptidoglycan biosynthesis. Functionally, provides the (R)-glutamate required for cell wall biosynthesis. The protein is Glutamate racemase of Mycolicibacterium paratuberculosis (strain ATCC BAA-968 / K-10) (Mycobacterium paratuberculosis).